A 301-amino-acid chain; its full sequence is UDP-N-acetylenolpyruvoylglucosamine reductase (301 aa).

The 168-residue stretch at 27 to 194 (RVGGPADVVF…LDAIFEGTPD (168 aa)) folds into the FAD-binding PCMH-type domain. Residue Arg172 is part of the active site. Ser223 serves as the catalytic Proton donor. Glu293 is an active-site residue.

The protein belongs to the MurB family. FAD is required as a cofactor.

It is found in the cytoplasm. It catalyses the reaction UDP-N-acetyl-alpha-D-muramate + NADP(+) = UDP-N-acetyl-3-O-(1-carboxyvinyl)-alpha-D-glucosamine + NADPH + H(+). It functions in the pathway cell wall biogenesis; peptidoglycan biosynthesis. Its function is as follows. Cell wall formation. In Caulobacter vibrioides (strain NA1000 / CB15N) (Caulobacter crescentus), this protein is UDP-N-acetylenolpyruvoylglucosamine reductase.